The chain runs to 218 residues: Ribonuclease T (218 aa).

The Exonuclease domain maps to 24-198 (VIIDVETAGF…YDAERTAELF (175 aa)). Mg(2+) contacts are provided by Asp-27, Glu-29, His-185, and Asp-190. His-185 acts as the Proton donor/acceptor in catalysis.

It belongs to the RNase T family. In terms of assembly, homodimer. Mg(2+) serves as cofactor.

Trims short 3' overhangs of a variety of RNA species, leaving a one or two nucleotide 3' overhang. Responsible for the end-turnover of tRNA: specifically removes the terminal AMP residue from uncharged tRNA (tRNA-C-C-A). Also appears to be involved in tRNA biosynthesis. In Histophilus somni (strain 129Pt) (Haemophilus somnus), this protein is Ribonuclease T.